The following is a 333-amino-acid chain: Acetoin:2,6-dichlorophenolindophenol oxidoreductase subunit alpha (333 aa).

Tetramer of 2 alpha and 2 beta subunits. It depends on thiamine diphosphate as a cofactor.

It functions in the pathway ketone degradation; acetoin degradation. Catalyzes the 2,6-dichlorophenolindophenol-dependent cleavage of acetoin into acetate and acetaldehyde, in vitro. The alpha subunit is probably the catalytic subunit of the enzyme. This Cupriavidus necator (strain ATCC 17699 / DSM 428 / KCTC 22496 / NCIMB 10442 / H16 / Stanier 337) (Ralstonia eutropha) protein is Acetoin:2,6-dichlorophenolindophenol oxidoreductase subunit alpha (acoA).